Reading from the N-terminus, the 222-residue chain is Cytidylate kinase (222 aa).

10 to 18 (GTSSSGKSV) contributes to the ATP binding site.

The protein belongs to the cytidylate kinase family. Type 1 subfamily.

The protein localises to the cytoplasm. The enzyme catalyses CMP + ATP = CDP + ADP. The catalysed reaction is dCMP + ATP = dCDP + ADP. This chain is Cytidylate kinase, found in Mycoplasma capricolum subsp. capricolum (strain California kid / ATCC 27343 / NCTC 10154).